The following is a 667-amino-acid chain: Probable sulfate permease C320.05 (667 aa).

The disordered stretch occupies residues Met1–Leu27. Positions Phe16 to Arg25 are enriched in polar residues. The next 12 membrane-spanning stretches (helical) occupy residues Ile77 to Ser97, Phe102 to Cys122, Ile162 to Phe182, Gly198 to Phe218, Met240 to Gly260, Ile275 to Phe295, Tyr301 to Pro321, Gly336 to Leu356, Leu368 to Gly388, Val405 to Phe425, Leu433 to Phe453, and Gly465 to Phe485. Residues Ser532–Val657 enclose the STAS domain.

The protein belongs to the SLC26A/SulP transporter (TC 2.A.53) family.

It is found in the endoplasmic reticulum membrane. In terms of biological role, possible sulfate transporter. The chain is Probable sulfate permease C320.05 from Schizosaccharomyces pombe (strain 972 / ATCC 24843) (Fission yeast).